Consider the following 223-residue polypeptide: Kinetochore protein Spc25 (223 aa).

The stretch at 65–115 forms a coiled coil; it reads LRCGELEKRANFMEELTQELEATKQRNLVMRDQIKQLNVLARQHRNEVMES.

It belongs to the SPC25 family. In terms of assembly, component of the Ndc80 complex, which is composed of Ndc80, Nuf2 and Spc25.

It localises to the nucleus. The protein localises to the chromosome. Its subcellular location is the centromere. It is found in the kinetochore. Functionally, acts as a component of the essential kinetochore-associated Ndc80 complex, which is required for chromosome segregation and spindle checkpoint activity during meiosis and mitosis. Required for kinetochore integrity and the organization of stable microtubule binding sites in the outer plate of the kinetochore. Participates in SAC signaling that responds specifically to disruptions in spindle microtubule dynamics. The NDC80 complex synergistically enhances the affinity of the SKA1 complex for microtubules and may allow the NDC80 complex to track depolymerizing microtubules. The protein is Kinetochore protein Spc25 of Drosophila lutescens (Fruit fly).